The chain runs to 1877 residues: MILKSFLLGNPVSLCMNIINSVVMVGLYYGFLTTFSIGPSYLFLLRARVLEEGEEGTEKKVSATTGFIAGQLMMFISIYYAPLHLALGRPHTITVLALPYLLFHFFWNNHKHFFDYGSTTRNSMRNLSIQCVFLNNLIFQLFNHFILPSSMLARLVNIYMFRCNNKMLFVTSSFVGWLIGHIFFMKWVELVLVWIQQNNSIRSNKYIRSNKYLVSELRNSMARIFSILLFITCVYYLGRIPSPIVTKKFKETSETEERGEGEEETDVEIETTFETKGTRQEQEGSTEEDPSLFSEEKEDPDKIDEREEIRVNEKEKTRDEFNFQETFYKDSQVYKTSYMDRNKNKENSKLEIFKLKEDPFFLWFEKPLVTLLFDYKRWNRPLRYIKNNHFENAVRNEVSQYFFYICRNNGKERISFTYPPSLSTFLKMIERKISLLTKEKLPSDELYDHWIYTNDQKKNNLSKKFRNQMETVNKESITLDVFEKRTRLCNDENKKKYLPKIYDPFLNGPGRGRVKFFFSSQILNKMSIKNYIETGWINKIHSILFTTDQEKLEEKIDTFDKNSLSTEKKLSLFPFPETEQGRIHSEDQIKILKIFFNAVITEPKTKRIKKKSIGIKEISTKVPSWSYKLINDLEQQEGENEEMVAEDHEIRSRKTKHVLIFTDNDENTDANSKNTNNLDEADEVTFIRYSQQSDFRRDIIKGSMRAQRRKTVICELFQANVHSPLFLDRIGKPLFSFDISGMIKFILKKWMYKKTTELRISDYTQEKKKENEKKKEEDKREEYKRQEKARIEIAQTWDRVLFAQAIRGSLLVTQSFLRKYILFPSVIIAKNIARILLFQFPEWSEDLKDWNREMHVKCTYNGVQLSETEFPKNWLTDGIQIKILFPFYIKPWHRSKVPPRQKDRLRNKEQKNDFCFLTVWGMETEVPFGSPRKQRSFFEPIFKELRKKIIKLQKNPFLVIQVLKERINLFLNLSKERKKSVMKTILFLKGIIKELSKRNPIQLFGLRKIDELSETKKEKNGVISNGMINESSIQIRFMDLTDSSLTEKKMKDLDDRTSTIRNQIEKITKDNKKGFLTPEININISSNKISYPTKLLASIKNIWQKLKKFKRINVRLIRKSYSFFKFLIERIYINILICIINSPRITTQLFFDNSTKMIDKYIYNNETNKEKIAKTNKNTIRFIWTKKKSISDISKKNSKILLSSFSQAYVFYQLYQTQFCNLYKLRYVLQYHGTSFFLKNEIKDYFETQGIFYPELKHKNILNSEMIQWKNWLRGHYQYDLSPIRWYRLVPHKWRNRFNQTRLVQNKDLNKRHSDEKDRLILINYKKLNDFELNSLSNSKYNLQKYYGYDLFSYKSINYENKKDSHIYVSPLRLNNKQEISYNYNKIYKKGKLINMPGGIIPINLEDDDILNLXKFTDRKYLDWRIFDFCLRNKVNIESWIDIDTNGNKNTKTGFNNYQIIDKMDQKGIFFLKICQNGGIMASNKKKDLFDWMAMNEEILSRPISNLNLWFFPEFVILYNTYIMKPWIIPIQLLLLNFYENVSENKNITRKNKRDLFLFSNEKKSIELENRNQEEKESAIRDNLESDAQNQANLGSLFSNQEKDIGEDYASSDMKKRRKKKEYKSNTEVELYFFLKRYLRIQLRWDDSLNQRMINNIKIYCLLLRLINPREIAISSIQRGEMSLDILITQKDLTLTELMKKGILIIEPIRLSIKNDGQLIMYQSLNISLFHKSKPKINQIYREKSYVAKINLDKSIARHPKMAENRYKNDYDLLFVPEKVLSTKRRRELRIRICFNSRKRNGIHKNPVFCNNVKNWGEFLDKRKHFEKKKLIKLKFFLWPNYRLEDLSCMNRYWFDTNNGGRFTMIRIHMYPRLQIC.

Helical transmembrane passes span 18–38 (IINSVVMVGLYYGFLTTFSIG), 67–87 (FIAGQLMMFISIYYAPLHLAL), 90–110 (PHTITVLALPYLLFHFFWNNH), 127–147 (LSIQCVFLNNLIFQLFNHFIL), 175–195 (VGWLIGHIFFMKWVELVLVWI), and 224–244 (IFSILLFITCVYYLGRIPSPI). The segment covering 249–258 (FKETSETEER) has biased composition (basic and acidic residues). Positions 249–308 (FKETSETEERGEGEEETDVEIETTFETKGTRQEQEGSTEEDPSLFSEEKEDPDKIDEREE) are disordered. Acidic residues-rich tracts occupy residues 259–271 (GEGEEETDVEIET) and 284–298 (GSTEEDPSLFSEEKE). The span at 299-308 (DPDKIDEREE) shows a compositional bias: basic and acidic residues.

The protein belongs to the TIC214 family. Part of the Tic complex.

The protein resides in the plastid. It is found in the chloroplast inner membrane. Involved in protein precursor import into chloroplasts. May be part of an intermediate translocation complex acting as a protein-conducting channel at the inner envelope. This chain is Protein TIC 214, found in Eucalyptus globulus subsp. globulus (Tasmanian blue gum).